The chain runs to 436 residues: 3-ketoacyl-CoA thiolase (436 aa).

Cysteine 99 functions as the Acyl-thioester intermediate in the catalytic mechanism. Catalysis depends on proton acceptor residues histidine 392 and cysteine 422.

The protein belongs to the thiolase-like superfamily. Thiolase family. Heterotetramer of two alpha chains (FadJ) and two beta chains (FadI).

The protein localises to the cytoplasm. The catalysed reaction is an acyl-CoA + acetyl-CoA = a 3-oxoacyl-CoA + CoA. The protein operates within lipid metabolism; fatty acid beta-oxidation. Functionally, catalyzes the final step of fatty acid oxidation in which acetyl-CoA is released and the CoA ester of a fatty acid two carbons shorter is formed. The chain is 3-ketoacyl-CoA thiolase from Shewanella putrefaciens (strain CN-32 / ATCC BAA-453).